A 126-amino-acid chain; its full sequence is NADH-quinone oxidoreductase subunit A (126 aa).

3 consecutive transmembrane segments (helical) span residues Ile11–Leu31, Phe64–Ala84, and Glu98–Ile118.

The protein belongs to the complex I subunit 3 family. As to quaternary structure, NDH-1 is composed of 14 different subunits. Subunits NuoA, H, J, K, L, M, N constitute the membrane sector of the complex.

The protein resides in the cell inner membrane. The enzyme catalyses a quinone + NADH + 5 H(+)(in) = a quinol + NAD(+) + 4 H(+)(out). NDH-1 shuttles electrons from NADH, via FMN and iron-sulfur (Fe-S) centers, to quinones in the respiratory chain. The immediate electron acceptor for the enzyme in this species is believed to be a menaquinone. Couples the redox reaction to proton translocation (for every two electrons transferred, four hydrogen ions are translocated across the cytoplasmic membrane), and thus conserves the redox energy in a proton gradient. This chain is NADH-quinone oxidoreductase subunit A, found in Cytophaga hutchinsonii (strain ATCC 33406 / DSM 1761 / CIP 103989 / NBRC 15051 / NCIMB 9469 / D465).